Consider the following 400-residue polypeptide: Enoyl-[acyl-carrier-protein] reductase [NADH] (400 aa).

Residues 48–53 (GSSSGY), 74–75 (FE), 111–112 (DA), and 139–140 (LA) each bind NAD(+). A substrate-binding site is contributed by Tyr-225. Tyr-235 acts as the Proton donor in catalysis. NAD(+) contacts are provided by residues Lys-244 and 273–275 (VVT).

The protein belongs to the TER reductase family. Monomer.

It carries out the reaction a 2,3-saturated acyl-[ACP] + NAD(+) = a (2E)-enoyl-[ACP] + NADH + H(+). Its pathway is lipid metabolism; fatty acid biosynthesis. Its function is as follows. Involved in the final reduction of the elongation cycle of fatty acid synthesis (FAS II). Catalyzes the reduction of a carbon-carbon double bond in an enoyl moiety that is covalently linked to an acyl carrier protein (ACP). The sequence is that of Enoyl-[acyl-carrier-protein] reductase [NADH] from Shewanella baltica (strain OS223).